The following is a 41-amino-acid chain: Pi-stichotoxin-Hcr5c (41 aa).

3 disulfide bridges follow: C4–C37, C6–C30, and C20–C38.

The protein belongs to the sea anemone type 3 (BDS) potassium channel toxin family.

It localises to the secreted. The protein localises to the nematocyst. Functionally, weakly and reversibly inhibits rat homomeric ASIC1 (isoform ASIC1a) (IC(50)=4.95 uM), and ASIC3 (IC(50)=17 uM). ASIC1a current inhibition and ASIC3 transient current inhibition are not complete, and reach a maximum of 70% inhibition and 80%, respectively. The protein is Pi-stichotoxin-Hcr5c of Radianthus crispa (Leathery sea anemone).